The primary structure comprises 328 residues: Putative gluconeogenesis factor (328 aa).

This sequence belongs to the gluconeogenesis factor family.

The protein resides in the cytoplasm. In terms of biological role, required for morphogenesis under gluconeogenic growth conditions. This is Putative gluconeogenesis factor from Aquifex aeolicus (strain VF5).